The following is a 143-amino-acid chain: AP-2 complex subunit sigma (143 aa).

This sequence belongs to the adaptor complexes small subunit family. In terms of assembly, adaptor protein complex 2 (AP-2) is a heterotetramer composed of two large adaptins (alpha-type subunit APL3 and beta-type subunit APL1), a medium chain (mu-type subunit APM4) and a small adaptin (sigma-type subunit APS2).

The protein localises to the cell membrane. It localises to the membrane. The protein resides in the coated pit. Functionally, component of the adaptor complexes which link clathrin to receptors in coated vesicles. Clathrin-associated protein complexes are believed to interact with the cytoplasmic tails of membrane proteins, leading to their selection and concentration. This chain is AP-2 complex subunit sigma (APS2), found in Gibberella zeae (strain ATCC MYA-4620 / CBS 123657 / FGSC 9075 / NRRL 31084 / PH-1) (Wheat head blight fungus).